Reading from the N-terminus, the 425-residue chain is Pleckstrin homology domain-containing family A member 2 (425 aa).

Residues 7-113 (QNRICGFLDI…WVEALNQASK (107 aa)) form the PH 1 domain. Lys-141 is covalently cross-linked (Glycyl lysine isopeptide (Lys-Gly) (interchain with G-Cter in SUMO2)). The residue at position 184 (Ser-184) is a Phosphoserine. The PH 2 domain occupies 198–298 (PLIKSGYCVK…WIKEIGAAVQ (101 aa)). Ser-314 and Ser-349 each carry phosphoserine. The tract at residues 374 to 410 (AEDSLFTPRLGESSTSAVLPSSRIRHRSEPQHPKEKP) is disordered. Residues 400 to 410 (RSEPQHPKEKP) are compositionally biased toward basic and acidic residues.

In terms of assembly, binds MPDZ and PTPN13.

It is found in the cytoplasm. The protein localises to the cell membrane. Its subcellular location is the nucleus. Binds specifically to phosphatidylinositol 3,4-diphosphate (PtdIns3,4P2), but not to other phosphoinositides. May recruit other proteins to the plasma membrane. The protein is Pleckstrin homology domain-containing family A member 2 (PLEKHA2) of Bos taurus (Bovine).